Consider the following 63-residue polypeptide: Large ribosomal subunit protein bL32 (63 aa).

Residues 1 to 23 form a disordered region; the sequence is MATPKAKVSKSRRDKRRAQFTAR. Basic residues predominate over residues 7–18; the sequence is KVSKSRRDKRRA.

It belongs to the bacterial ribosomal protein bL32 family.

This is Large ribosomal subunit protein bL32 from Prosthecochloris aestuarii (strain DSM 271 / SK 413).